Reading from the N-terminus, the 312-residue chain is tRNA dimethylallyltransferase (312 aa).

15-22 (GPTAAGKS) contacts ATP. 17-22 (TAAGKS) lines the substrate pocket. The interval 40–43 (DSMQ) is interaction with substrate tRNA.

It belongs to the IPP transferase family. Monomer. Requires Mg(2+) as cofactor.

The enzyme catalyses adenosine(37) in tRNA + dimethylallyl diphosphate = N(6)-dimethylallyladenosine(37) in tRNA + diphosphate. Its function is as follows. Catalyzes the transfer of a dimethylallyl group onto the adenine at position 37 in tRNAs that read codons beginning with uridine, leading to the formation of N6-(dimethylallyl)adenosine (i(6)A). The chain is tRNA dimethylallyltransferase from Streptomyces griseus subsp. griseus (strain JCM 4626 / CBS 651.72 / NBRC 13350 / KCC S-0626 / ISP 5235).